The chain runs to 323 residues: Delta-aminolevulinic acid dehydratase (323 aa).

Zn(2+)-binding residues include C118, C120, and C128. K193 serves as the catalytic Schiff-base intermediate with substrate. Residues R203 and R215 each contribute to the 5-aminolevulinate site. E231 provides a ligand contact to Mg(2+). Residue K246 is the Schiff-base intermediate with substrate of the active site. 5-aminolevulinate is bound by residues S272 and Y311.

The protein belongs to the ALAD family. As to quaternary structure, homooctamer. Requires Zn(2+) as cofactor.

It carries out the reaction 2 5-aminolevulinate = porphobilinogen + 2 H2O + H(+). It functions in the pathway porphyrin-containing compound metabolism; protoporphyrin-IX biosynthesis; coproporphyrinogen-III from 5-aminolevulinate: step 1/4. Catalyzes an early step in the biosynthesis of tetrapyrroles. Binds two molecules of 5-aminolevulinate per subunit, each at a distinct site, and catalyzes their condensation to form porphobilinogen. This is Delta-aminolevulinic acid dehydratase (hemB) from Helicobacter pylori (strain J99 / ATCC 700824) (Campylobacter pylori J99).